We begin with the raw amino-acid sequence, 583 residues long: 2-succinyl-5-enolpyruvyl-6-hydroxy-3-cyclohexene-1-carboxylate synthase (583 aa).

This sequence belongs to the TPP enzyme family. MenD subfamily. As to quaternary structure, homodimer. Mg(2+) is required as a cofactor. Mn(2+) serves as cofactor. Requires thiamine diphosphate as cofactor.

It carries out the reaction isochorismate + 2-oxoglutarate + H(+) = 5-enolpyruvoyl-6-hydroxy-2-succinyl-cyclohex-3-ene-1-carboxylate + CO2. It participates in quinol/quinone metabolism; 1,4-dihydroxy-2-naphthoate biosynthesis; 1,4-dihydroxy-2-naphthoate from chorismate: step 2/7. The protein operates within quinol/quinone metabolism; menaquinone biosynthesis. In terms of biological role, catalyzes the thiamine diphosphate-dependent decarboxylation of 2-oxoglutarate and the subsequent addition of the resulting succinic semialdehyde-thiamine pyrophosphate anion to isochorismate to yield 2-succinyl-5-enolpyruvyl-6-hydroxy-3-cyclohexene-1-carboxylate (SEPHCHC). The polypeptide is 2-succinyl-5-enolpyruvyl-6-hydroxy-3-cyclohexene-1-carboxylate synthase (Chlorobium luteolum (strain DSM 273 / BCRC 81028 / 2530) (Pelodictyon luteolum)).